Reading from the N-terminus, the 241-residue chain is Enolase-phosphatase E1 (241 aa).

Residues D9 and E11 each coordinate Mg(2+). Substrate contacts are provided by residues 133-134 (SS) and K172. Mg(2+) is bound at residue D198.

The protein belongs to the HAD-like hydrolase superfamily. MasA/MtnC family. Monomer. Mg(2+) is required as a cofactor.

The protein resides in the cytoplasm. The protein localises to the nucleus. It carries out the reaction 5-methylsulfanyl-2,3-dioxopentyl phosphate + H2O = 1,2-dihydroxy-5-(methylsulfanyl)pent-1-en-3-one + phosphate. Its pathway is amino-acid biosynthesis; L-methionine biosynthesis via salvage pathway; L-methionine from S-methyl-5-thio-alpha-D-ribose 1-phosphate: step 3/6. The protein operates within amino-acid biosynthesis; L-methionine biosynthesis via salvage pathway; L-methionine from S-methyl-5-thio-alpha-D-ribose 1-phosphate: step 4/6. In terms of biological role, bifunctional enzyme that catalyzes the enolization of 2,3-diketo-5-methylthiopentyl-1-phosphate (DK-MTP-1-P) into the intermediate 2-hydroxy-3-keto-5-methylthiopentenyl-1-phosphate (HK-MTPenyl-1-P), which is then dephosphorylated to form the acireductone 1,2-dihydroxy-3-keto-5-methylthiopentene (DHK-MTPene). The chain is Enolase-phosphatase E1 from Scheffersomyces stipitis (strain ATCC 58785 / CBS 6054 / NBRC 10063 / NRRL Y-11545) (Yeast).